A 37-amino-acid chain; its full sequence is Large ribosomal subunit protein bL36 (37 aa).

This sequence belongs to the bacterial ribosomal protein bL36 family.

This is Large ribosomal subunit protein bL36 from Moorella thermoacetica (strain ATCC 39073 / JCM 9320).